The chain runs to 149 residues: MTANFSTHVFSPQHCGCDRLTSIDDVRQCLTEYIYWSSYAYRNRQCAGQLYSTLLSFRDDAESVFIDVRELVKNMPWDDVKDCVEIIRCYIPDEQKTIREISAIIGLCAYAATYWGGEDHPTSNSLNALFVMLKMLNYVDYNIIFRRMN.

This sequence belongs to the orthopoxvirus OPG200 family. Homodimers. Interacts with host IKBKB; this interaction inhibits host NF-kappa-B activation.

Its function is as follows. Contributes to virulence by binding to the host IKBKB subunit of the IKK complex and preventing host NF-kappa-B activation in response to pro-inflammatory stimuli such as TNF-alpha or IL1B. Mechanistically, sterically hinders the direct contact between the kinase domains of IKBKB in the IKK complex containing IKBKB, CHUK/IKKA and NEMO. The chain is Protein OPG200 (OPG200) from Variola virus (isolate Human/India/Ind3/1967) (VARV).